We begin with the raw amino-acid sequence, 72 residues long: Translation initiation factor IF-1 (72 aa).

Residues 1–72 (MSKEEAIEVE…TRGRITYRAK (72 aa)) form the S1-like domain.

It belongs to the IF-1 family. As to quaternary structure, component of the 30S ribosomal translation pre-initiation complex which assembles on the 30S ribosome in the order IF-2 and IF-3, IF-1 and N-formylmethionyl-tRNA(fMet); mRNA recruitment can occur at any time during PIC assembly.

Its subcellular location is the cytoplasm. Functionally, one of the essential components for the initiation of protein synthesis. Stabilizes the binding of IF-2 and IF-3 on the 30S subunit to which N-formylmethionyl-tRNA(fMet) subsequently binds. Helps modulate mRNA selection, yielding the 30S pre-initiation complex (PIC). Upon addition of the 50S ribosomal subunit IF-1, IF-2 and IF-3 are released leaving the mature 70S translation initiation complex. This chain is Translation initiation factor IF-1, found in Geobacter sulfurreducens (strain ATCC 51573 / DSM 12127 / PCA).